The chain runs to 336 residues: Dihydroorotate dehydrogenase (quinone) (336 aa).

Residues 62-66 and Thr86 contribute to the FMN site; that span reads AGLDK. A substrate-binding site is contributed by Lys66. Residue 111–115 participates in substrate binding; sequence NRMGF. Residues Asn139 and Asn172 each coordinate FMN. Asn172 is a binding site for substrate. Ser175 acts as the Nucleophile in catalysis. Asn177 contacts substrate. FMN is bound by residues Lys217 and Thr245. Position 246–247 (246–247) interacts with substrate; that stretch reads NT. FMN is bound by residues Gly268, Gly297, and 318–319; that span reads YS.

Belongs to the dihydroorotate dehydrogenase family. Type 2 subfamily. In terms of assembly, monomer. FMN is required as a cofactor.

It localises to the cell membrane. It carries out the reaction (S)-dihydroorotate + a quinone = orotate + a quinol. It functions in the pathway pyrimidine metabolism; UMP biosynthesis via de novo pathway; orotate from (S)-dihydroorotate (quinone route): step 1/1. Functionally, catalyzes the conversion of dihydroorotate to orotate with quinone as electron acceptor. The chain is Dihydroorotate dehydrogenase (quinone) from Baumannia cicadellinicola subsp. Homalodisca coagulata.